The chain runs to 234 residues: 2,3-bisphosphoglycerate-dependent phosphoglycerate mutase (234 aa).

Residues Arg-8–Asn-15, Thr-21–Gly-22, Arg-60, Glu-87–Tyr-90, Lys-98, Arg-114–Arg-115, and Gly-183–Asn-184 each bind substrate. The active-site Tele-phosphohistidine intermediate is His-9. Catalysis depends on Glu-87, which acts as the Proton donor/acceptor.

It belongs to the phosphoglycerate mutase family. BPG-dependent PGAM subfamily. Homodimer.

It catalyses the reaction (2R)-2-phosphoglycerate = (2R)-3-phosphoglycerate. It functions in the pathway carbohydrate degradation; glycolysis; pyruvate from D-glyceraldehyde 3-phosphate: step 3/5. Catalyzes the interconversion of 2-phosphoglycerate and 3-phosphoglycerate. This chain is 2,3-bisphosphoglycerate-dependent phosphoglycerate mutase, found in Geobacter sp. (strain M21).